A 301-amino-acid chain; its full sequence is Probable splicing factor ECU05_1440 (301 aa).

Residues 1 to 70 (MQIFIGKIPN…APISVERANG (70 aa)) enclose the RRM 1 domain. Disordered regions lie at residues 106–140 (PPMR…SFRM) and 255–301 (SKDE…AEND). Composition is skewed to basic and acidic residues over residues 110–140 (YESR…SFRM) and 255–270 (SKDE…HMRS). Residues 182 to 255 (LKVVFENIAP…HILKTRSYLS (74 aa)) form the RRM 2 domain.

Belongs to the splicing factor SR family.

Its subcellular location is the nucleus. Plays a role in splicing. The sequence is that of Probable splicing factor ECU05_1440 from Encephalitozoon cuniculi (strain GB-M1) (Microsporidian parasite).